Here is a 371-residue protein sequence, read N- to C-terminus: uncharacterized protein (371 aa).

It to A.pernix APE_1804 and S.solfataricus SSO2105.

This is an uncharacterized protein from Aeropyrum pernix (strain ATCC 700893 / DSM 11879 / JCM 9820 / NBRC 100138 / K1).